The sequence spans 414 residues: Eukaryotic initiation factor 4A-1 (414 aa).

The Q motif motif lies at 41 to 69 (ESFDDMGLQENLLRGIYAYGFEKPSAIQQ). The region spanning 72 to 242 (IVPFCKGLDV…RKFMNKPVRI (171 aa)) is the Helicase ATP-binding domain. 85 to 92 (AQSGTGKT) is a binding site for ATP. The DEAD box motif lies at 190 to 193 (DEAD). The Helicase C-terminal domain occupies 253 to 414 (GIKQFYVNVE…ELPANVADLL (162 aa)).

It belongs to the DEAD box helicase family. eIF4A subfamily. In terms of assembly, eIF4F is a multi-subunit complex, the composition of which varies with external and internal environmental conditions. It is composed of at least EIF4A, EIF4E and EIF4G.

The enzyme catalyses ATP + H2O = ADP + phosphate + H(+). ATP-dependent RNA helicase which is a subunit of the eIF4F complex involved in cap recognition and is required for mRNA binding to ribosome. In the current model of translation initiation, eIF4A unwinds RNA secondary structures in the 5'-UTR of mRNAs which is necessary to allow efficient binding of the small ribosomal subunit, and subsequent scanning for the initiator codon. This Oryza sativa subsp. japonica (Rice) protein is Eukaryotic initiation factor 4A-1.